The primary structure comprises 327 residues: Phenylalanine--tRNA ligase alpha subunit (327 aa).

Position 252 (E252) interacts with Mg(2+).

This sequence belongs to the class-II aminoacyl-tRNA synthetase family. Phe-tRNA synthetase alpha subunit type 1 subfamily. As to quaternary structure, tetramer of two alpha and two beta subunits. Mg(2+) serves as cofactor.

The protein resides in the cytoplasm. The catalysed reaction is tRNA(Phe) + L-phenylalanine + ATP = L-phenylalanyl-tRNA(Phe) + AMP + diphosphate + H(+). The sequence is that of Phenylalanine--tRNA ligase alpha subunit from Photorhabdus laumondii subsp. laumondii (strain DSM 15139 / CIP 105565 / TT01) (Photorhabdus luminescens subsp. laumondii).